The following is a 244-amino-acid chain: Short-chain dehydrogenase/reductase family member NovK (244 aa).

Residues Gly9–Glu12, Glu59–Leu60, and Arg154–Asp158 each bind NADP(+).

It belongs to the short-chain dehydrogenases/reductases (SDR) family. Heterotetramer; the NovJ(2)K(2) heterotetramer is composed of subunits of 2 NovJ and 2 subunits of NovK.

It functions in the pathway antibiotic biosynthesis; novobiocin biosynthesis. Functionally, non-catalytic subunit of the NovJ(2)K(2) heterotetramer that catalyzes the NADPH-dependent reduction of the tyrosyl moiety of L-beta-OH-Tyr-S-NovH intermediate to yield the tethered beta-ketotyrosyl-S-NovH in the novobiocin biosynthesis pathway. Novobiocin is an aminocoumarin family antibiotic that targets bacterial DNA gyrases. The sequence is that of Short-chain dehydrogenase/reductase family member NovK (novK) from Streptomyces niveus (Streptomyces spheroides).